The following is an 80-amino-acid chain: Metallothionein-like protein type 2, MT2-22 (80 aa).

The protein belongs to the metallothionein superfamily. Type 15 family.

Metallothioneins have a high content of cysteine residues that bind various heavy metals. The chain is Metallothionein-like protein type 2, MT2-22 from Brassica juncea (Indian mustard).